The sequence spans 364 residues: Probable dual-specificity RNA methyltransferase RlmN (364 aa).

The active-site Proton acceptor is E106. The Radical SAM core domain occupies 112–350; that stretch reads YPRRNTVCIS…SCTVRDTRGR (239 aa). C119 and C356 are oxidised to a cystine. The [4Fe-4S] cluster site is built by C126, C130, and C133. Residues 177-178, S211, 234-236, and N313 contribute to the S-adenosyl-L-methionine site; these read GE and SLH. The active-site S-methylcysteine intermediate is the C356.

It belongs to the radical SAM superfamily. RlmN family. Requires [4Fe-4S] cluster as cofactor.

It is found in the cytoplasm. It catalyses the reaction adenosine(2503) in 23S rRNA + 2 reduced [2Fe-2S]-[ferredoxin] + 2 S-adenosyl-L-methionine = 2-methyladenosine(2503) in 23S rRNA + 5'-deoxyadenosine + L-methionine + 2 oxidized [2Fe-2S]-[ferredoxin] + S-adenosyl-L-homocysteine. It carries out the reaction adenosine(37) in tRNA + 2 reduced [2Fe-2S]-[ferredoxin] + 2 S-adenosyl-L-methionine = 2-methyladenosine(37) in tRNA + 5'-deoxyadenosine + L-methionine + 2 oxidized [2Fe-2S]-[ferredoxin] + S-adenosyl-L-homocysteine. Its function is as follows. Specifically methylates position 2 of adenine 2503 in 23S rRNA and position 2 of adenine 37 in tRNAs. This chain is Probable dual-specificity RNA methyltransferase RlmN, found in Mycobacterium bovis (strain ATCC BAA-935 / AF2122/97).